The chain runs to 239 residues: Transcriptional regulatory protein RstA (239 aa).

One can recognise a Response regulatory domain in the interval 3–116 (TIVFVEDDAE…VLLARLRLHL (114 aa)). Residue Asp52 is modified to 4-aspartylphosphate. Residues 136 to 235 (YKALHFGTLT…VRNKGYLFAP (100 aa)) constitute a DNA-binding region (ompR/PhoB-type).

In terms of processing, phosphorylated by RstB.

Its subcellular location is the cytoplasm. Its function is as follows. Member of the two-component regulatory system RstB/RstA. The polypeptide is Transcriptional regulatory protein RstA (rstA) (Escherichia coli (strain K12)).